A 152-amino-acid chain; its full sequence is TRAPP-associated protein TCA17 (152 aa).

This sequence belongs to the TRAPP small subunits family. Sedlin subfamily. In terms of assembly, interacts with the TRAPP II complex; TRAPP II subunits TRS33 and TRS65 are required for this interaction.

Its subcellular location is the golgi apparatus. The protein resides in the trans-Golgi network. Functionally, required, together with the TRAPP II subunit TRS33, for TRAPP II complex assembly or stability, and for proper Golgi localization of TRAPP and the Rab GTPase YPT31. This chain is TRAPP-associated protein TCA17 (TCA17), found in Saccharomyces cerevisiae (strain ATCC 204508 / S288c) (Baker's yeast).